A 1235-amino-acid polypeptide reads, in one-letter code: Myosin-1 (1235 aa).

The segment at M1–D34 is disordered. Basic and acidic residues predominate over residues D9–G19. Positions I41 to D715 constitute a Myosin motor domain. G134–T141 lines the ATP pocket. Positions S405 to A487 are actin-binding. IQ domains lie at H719–A739 and A740–K765. Positions R773–P962 constitute a TH1 domain. Disordered regions lie at residues Y949 to P1076 and A1135 to W1235. The span at K982 to A1046 shows a compositional bias: low complexity. Over residues P1050–V1062 the composition is skewed to polar residues. Over residues R1063 to A1073 the composition is skewed to pro residues. The SH3 domain occupies K1075 to P1134. Over residues A1135 to A1150 the composition is skewed to pro residues. Polar residues predominate over residues S1180 to I1210.

This sequence belongs to the TRAFAC class myosin-kinesin ATPase superfamily. Myosin family.

It is found in the cytoplasm. Its subcellular location is the cytoskeleton. The protein resides in the actin patch. Functionally, type-I myosin implicated in the organization of the actin cytoskeleton. Required for proper actin cytoskeleton polarization. At the cell cortex, assembles in patch-like structures together with proteins from the actin-polymerizing machinery and promotes actin assembly. Functions as actin nucleation-promoting factor (NPF) for the Arp2/3 complex. This chain is Myosin-1 (myo-1), found in Neurospora crassa (strain ATCC 24698 / 74-OR23-1A / CBS 708.71 / DSM 1257 / FGSC 987).